The chain runs to 344 residues: Membrane progestin receptor delta (344 aa).

Topologically, residues 1 to 51 (MLSLKLPQLLQVHQVPRVFWEDGIMSGYRRPTSSALDCVLSSFQMTNETVN) are cytoplasmic. The chain crosses the membrane as a helical span at residues 52-72 (IWTHFLPTWYFLWRLLALAGG). Topologically, residues 73–83 (PGFRAEPYHWP) are extracellular. Residues 84–104 (LLVFLLPACLYPFASCCAHTF) traverse the membrane as a helical segment. The Cytoplasmic segment spans residues 105-113 (SSMSPRMRH). A helical membrane pass occupies residues 114–134 (ICYFLDYGALSLYSLGCAFPY). Over 135 to 147 (AAYSMPASWLHGH) the chain is Extracellular. Residues 148–168 (LHQFFVPAAALNSFLCTGLSC) traverse the membrane as a helical segment. Over 169 to 217 (YSRFLELESPGLSKVLRTGAFAYPFLFDNLPLFYRLGLCWGRGHGCGQE) the chain is Cytoplasmic. The chain crosses the membrane as a helical span at residues 218–238 (ALSTSHGYHLFCALLTGFLFA). Residues 239 to 258 (SHLPERLAPGRFDYIGHSHQ) lie on the Extracellular side of the membrane. A helical transmembrane segment spans residues 259 to 279 (LFHICAVLGTHFQLEAVLADM). Over 280–292 (GSRRAWLATQEPA) the chain is Cytoplasmic. Residues 293 to 313 (LGLAGTVATLVLAAAGNLLII) form a helical membrane-spanning segment. Residues 314–344 (AAFTATLLRAPSTCPLLQGGPLEGGTQAKQQ) are Extracellular-facing.

Belongs to the ADIPOR family. In terms of assembly, homodimer. Brain specific. Highly expressed in the hypothalamus, also expressed in forebrain, amygdala, corpus callosum and spinal cord.

The protein resides in the cell membrane. Its function is as follows. Plasma membrane progesterone (P4) receptor coupled to G proteins. Seems to act through a G(s) mediated pathway. Involved in neurosteroid inhibition of apoptosis. May be involved in regulating rapid P4 signaling in the nervous system. Also binds dehydroepiandrosterone (DHEA), pregnanolone, pregnenolone and allopregnanolone. The protein is Membrane progestin receptor delta of Homo sapiens (Human).